Here is a 214-residue protein sequence, read N- to C-terminus: Orotate phosphoribosyltransferase (214 aa).

K26 serves as a coordination point for 5-phospho-alpha-D-ribose 1-diphosphate. Residue 34–35 coordinates orotate; sequence FF. 5-phospho-alpha-D-ribose 1-diphosphate is bound by residues 72-73, R99, K100, K103, H105, and 124-132; these read YK and DDVITAGTA. Positions 128 and 157 each coordinate orotate.

The protein belongs to the purine/pyrimidine phosphoribosyltransferase family. PyrE subfamily. In terms of assembly, homodimer. Requires Mg(2+) as cofactor.

The catalysed reaction is orotidine 5'-phosphate + diphosphate = orotate + 5-phospho-alpha-D-ribose 1-diphosphate. It participates in pyrimidine metabolism; UMP biosynthesis via de novo pathway; UMP from orotate: step 1/2. Its function is as follows. Catalyzes the transfer of a ribosyl phosphate group from 5-phosphoribose 1-diphosphate to orotate, leading to the formation of orotidine monophosphate (OMP). The chain is Orotate phosphoribosyltransferase from Pseudomonas fluorescens (strain ATCC BAA-477 / NRRL B-23932 / Pf-5).